We begin with the raw amino-acid sequence, 465 residues long: D-ornithine/D-lysine decarboxylase (465 aa).

At Lys-80 the chain carries N6-(pyridoxal phosphate)lysine. Residues Gly-259 and 307 to 310 (EPGR) each bind pyridoxal 5'-phosphate. The Proton donor role is filled by Cys-387. Tyr-422 is a binding site for pyridoxal 5'-phosphate.

This sequence belongs to the Orn/Lys/Arg decarboxylase class-II family. In terms of assembly, homodimer. Pyridoxal 5'-phosphate serves as cofactor.

It catalyses the reaction D-ornithine + H(+) = putrescine + CO2. The enzyme catalyses D-lysine + H(+) = cadaverine + CO2. Its function is as follows. Catalyzes the decarboxylation of D-ornithine and D-lysine. Ornithine is likely the physiological substrate. Has no detectable diaminopimelate decarboxylase activity in vitro. The protein is D-ornithine/D-lysine decarboxylase of Salmonella typhimurium (strain LT2 / SGSC1412 / ATCC 700720).